Here is a 329-residue protein sequence, read N- to C-terminus: Beta-ketoacyl-[acyl-carrier-protein] synthase III (329 aa).

Active-site residues include Cys-114 and His-255. Residues 256 to 260 are ACP-binding; it reads QANQR. The active site involves Asn-285.

Belongs to the thiolase-like superfamily. FabH family. In terms of assembly, homodimer.

The protein resides in the cytoplasm. The enzyme catalyses malonyl-[ACP] + acetyl-CoA + H(+) = 3-oxobutanoyl-[ACP] + CO2 + CoA. Its pathway is lipid metabolism; fatty acid biosynthesis. Functionally, catalyzes the condensation reaction of fatty acid synthesis by the addition to an acyl acceptor of two carbons from malonyl-ACP. Catalyzes the first condensation reaction which initiates fatty acid synthesis and may therefore play a role in governing the total rate of fatty acid production. Possesses both acetoacetyl-ACP synthase and acetyl transacylase activities. Its substrate specificity determines the biosynthesis of branched-chain and/or straight-chain of fatty acids. The chain is Beta-ketoacyl-[acyl-carrier-protein] synthase III from Thermosynechococcus vestitus (strain NIES-2133 / IAM M-273 / BP-1).